Consider the following 249-residue polypeptide: MTHQPQQSPQFFLTAPSPCPYLEGQQERKVFTHLVGDKANEINDLLTQGGFRRSQNIAYRPACEVCRACISVRILAGEFEMTRNMRRVWSQNRDLIGRVHKAQPSTEQYALFRDYLDARHRSGGMSDMTVLDYAMMIEDTHVNTQIIEYRRRGPDSFMSAKGDGELIAVALTDVMADGLSMVYSFFLPHMQERSLGTYMILDHIERARAAGLPHVYLGYWVEGSRKMQYKIRFTPQEHLGPRGWQRFEG.

The protein belongs to the R-transferase family. Bpt subfamily.

The protein localises to the cytoplasm. The catalysed reaction is N-terminal L-glutamyl-[protein] + L-leucyl-tRNA(Leu) = N-terminal L-leucyl-L-glutamyl-[protein] + tRNA(Leu) + H(+). It carries out the reaction N-terminal L-aspartyl-[protein] + L-leucyl-tRNA(Leu) = N-terminal L-leucyl-L-aspartyl-[protein] + tRNA(Leu) + H(+). Its function is as follows. Functions in the N-end rule pathway of protein degradation where it conjugates Leu from its aminoacyl-tRNA to the N-termini of proteins containing an N-terminal aspartate or glutamate. The polypeptide is Aspartate/glutamate leucyltransferase (Brucella abortus (strain 2308)).